The chain runs to 212 residues: Peroxiredoxin 2 (212 aa).

In terms of domain architecture, Thioredoxin spans 7–162 (PLIGEKFPEM…ILRSIRALQL (156 aa)). The active-site Cysteine sulfenic acid (-SOH) intermediate is the C49. Residue R125 coordinates substrate.

This sequence belongs to the peroxiredoxin family. Prx6 subfamily. In terms of assembly, homodecamer. Pentamer of dimers that assemble into a ring structure.

Its subcellular location is the cytoplasm. It catalyses the reaction a hydroperoxide + [thioredoxin]-dithiol = an alcohol + [thioredoxin]-disulfide + H2O. Thiol-specific peroxidase that catalyzes the reduction of hydrogen peroxide and organic hydroperoxides to water and alcohols, respectively. Plays a role in cell protection against oxidative stress by detoxifying peroxides. In Sulfurisphaera tokodaii (strain DSM 16993 / JCM 10545 / NBRC 100140 / 7) (Sulfolobus tokodaii), this protein is Peroxiredoxin 2.